The chain runs to 119 residues: Ribosome-binding factor A (119 aa).

This sequence belongs to the RbfA family. As to quaternary structure, monomer. Binds 30S ribosomal subunits, but not 50S ribosomal subunits or 70S ribosomes.

It is found in the cytoplasm. In terms of biological role, one of several proteins that assist in the late maturation steps of the functional core of the 30S ribosomal subunit. Associates with free 30S ribosomal subunits (but not with 30S subunits that are part of 70S ribosomes or polysomes). Required for efficient processing of 16S rRNA. May interact with the 5'-terminal helix region of 16S rRNA. In Pseudothermotoga lettingae (strain ATCC BAA-301 / DSM 14385 / NBRC 107922 / TMO) (Thermotoga lettingae), this protein is Ribosome-binding factor A.